Consider the following 443-residue polypeptide: Serine/threonine-protein kinase SSN3 (443 aa).

Positions 1-24 (MERKRGREMNPPSADPPSATPVAR) are disordered. The Protein kinase domain occupies 54-384 (YKIVGFISSG…AEKALEHRYF (331 aa)). Residues 60–68 (ISSGTYGRV) and K84 each bind ATP. The Proton acceptor role is filled by D185. Residues 405 to 443 (RRVSQEDNDIRTSSLPGTKRSGLPDDSLMGRPAKRLKEG) are disordered.

The protein belongs to the protein kinase superfamily. CMGC Ser/Thr protein kinase family. CDC2/CDKX subfamily. Component of the srb8-11 complex, a regulatory module of the Mediator complex. Mg(2+) serves as cofactor.

The protein localises to the nucleus. The catalysed reaction is L-seryl-[protein] + ATP = O-phospho-L-seryl-[protein] + ADP + H(+). The enzyme catalyses L-threonyl-[protein] + ATP = O-phospho-L-threonyl-[protein] + ADP + H(+). It catalyses the reaction [DNA-directed RNA polymerase] + ATP = phospho-[DNA-directed RNA polymerase] + ADP + H(+). Component of the srb8-11 complex. The srb8-11 complex is a regulatory module of the Mediator complex which is itself dependent transcription. The srb8-11 complex may be involved in the transcriptional repression of a subset of genes regulated by Mediator. It may inhibit the association of the Mediator complex with RNA polymerase II to form the holoenzyme complex. The srb8-11 complex phosphorylates the C-terminal domain (CTD) of the largest subunit of RNA polymerase II. This chain is Serine/threonine-protein kinase SSN3 (SSN3), found in Phaeosphaeria nodorum (strain SN15 / ATCC MYA-4574 / FGSC 10173) (Glume blotch fungus).